The following is a 533-amino-acid chain: MGLFQKCSRLSLRSSYMWSVCPQYSIAVTARETPDRALIVHWTQHRDVHNSRRLGANPANPSAAPPRLPFSRVTQEDLSFFRALLPGRTITDPDLLKSSNVDWLKTVQGSSDVLLRPKTTEGVSQILRYCNERNLAVCPQGGNTGLVGGSVPVFDEIILSTSLMNQVFAFDNISGILTCQAGCVLENLSHYLEERDFIMPLDLGAKGSCHIGGNVSTNAGGLRLLRYGSLRGTVLGLEVVLADGHVLNCLATLRKDNTGYDLKQLFIGSEGTLGVITAVSILCPRKPKAVNVAFLGCSSFQQLLETFQCCRGMLGEILSAFEFLDASCMNLLEKHLKLTNPITECPFYIVIETAGSNATHDEEKLHQFLEEVMTSSLVTDGTVATEATKIKALWSLRERVTEALTHEGYTYKYDISLPVEKIYDLVQDMRRHLGGMAKNVVGYGHVGDGNLHLNITSPSKDFDLLAAIEPYVYEWTSQWKGSISAEHGLGLKKRNYIYYSKPSEAVALMGSIKAMLDPKGILNPYKTLPDNIN.

The N-terminal 55 residues, 1-55, are a transit peptide targeting the mitochondrion; that stretch reads MGLFQKCSRLSLRSSYMWSVCPQYSIAVTARETPDRALIVHWTQHRDVHNSRRLG. An FAD-binding PCMH-type domain is found at 107 to 286; sequence VQGSSDVLLR…TAVSILCPRK (180 aa). Residues Arg397, Thr401, and Lys412 each coordinate (R)-2-hydroxyglutarate. Residue Arg397 coordinates (R)-lactate. (R)-malate contacts are provided by Arg397, Thr401, and Lys412. Zn(2+)-binding residues include His445 and His452. (R)-2-hydroxyglutarate is bound at residue Asn454. Glu486 contacts Zn(2+). Residue His487 coordinates (R)-2-hydroxyglutarate. His487 serves as a coordination point for (R)-lactate. Residue His487 participates in (R)-malate binding.

This sequence belongs to the FAD-binding oxidoreductase/transferase type 4 family. The cofactor is FAD.

It is found in the mitochondrion. It carries out the reaction (R)-2-hydroxyglutarate + A = 2-oxoglutarate + AH2. The catalysed reaction is (R)-malate + A = oxaloacetate + AH2. Its function is as follows. Catalyzes the oxidation of D-2-hydroxyglutarate (D-2-HG) to alpha-ketoglutarate. Also catalyzes the oxidation of other D-2-hydroxyacids, such as D-malate (D-MAL) and D-lactate (D-LAC). Exhibits high activities towards D-2-HG and D-MAL but a very weak activity towards D-LAC. In Danio rerio (Zebrafish), this protein is D-2-hydroxyglutarate dehydrogenase, mitochondrial (d2hgdh).